The primary structure comprises 401 residues: Succinyl-diaminopimelate desuccinylase (401 aa).

Zn(2+) is bound at residue His82. Asp84 is an active-site residue. Residue Asp115 coordinates Zn(2+). Glu149 acts as the Proton acceptor in catalysis. Zn(2+)-binding residues include Glu150, Glu178, and His364.

This sequence belongs to the peptidase M20A family. DapE subfamily. In terms of assembly, homodimer. Zn(2+) is required as a cofactor. Co(2+) serves as cofactor.

The enzyme catalyses N-succinyl-(2S,6S)-2,6-diaminopimelate + H2O = (2S,6S)-2,6-diaminopimelate + succinate. It participates in amino-acid biosynthesis; L-lysine biosynthesis via DAP pathway; LL-2,6-diaminopimelate from (S)-tetrahydrodipicolinate (succinylase route): step 3/3. Its function is as follows. Catalyzes the hydrolysis of N-succinyl-L,L-diaminopimelic acid (SDAP), forming succinate and LL-2,6-diaminopimelate (DAP), an intermediate involved in the bacterial biosynthesis of lysine and meso-diaminopimelic acid, an essential component of bacterial cell walls. The chain is Succinyl-diaminopimelate desuccinylase from Verminephrobacter eiseniae (strain EF01-2).